A 219-amino-acid chain; its full sequence is MGFDYQRAVMLQRILSERVLAELDSFPRIDPSRIRSVAGVDASYRGGVQVGSAVLMDYRAKMPLAYTCLTSKPPIPYVPGLLAFREAPVYIKALHRLPAKPDIILVDGHGLSHPRAFGIATHIGLVLSTPSIGVAKKPLYGEVEEVNGRKLVRAHGRIVGEVVETNQGSEIYVSIGYLIRLEDAVEVVRHLMEPGLKLPLPIHLADNYSRSKCIKELRL.

2 residues coordinate Mg(2+): D41 and D107.

Belongs to the endonuclease V family. The cofactor is Mg(2+).

It localises to the cytoplasm. It carries out the reaction Endonucleolytic cleavage at apurinic or apyrimidinic sites to products with a 5'-phosphate.. DNA repair enzyme involved in the repair of deaminated bases. Selectively cleaves double-stranded DNA at the second phosphodiester bond 3' to a deoxyinosine leaving behind the intact lesion on the nicked DNA. This chain is Endonuclease V, found in Desulfurococcus amylolyticus (strain DSM 18924 / JCM 16383 / VKM B-2413 / 1221n) (Desulfurococcus kamchatkensis).